We begin with the raw amino-acid sequence, 130 residues long: Small ribosomal subunit protein uS8 (130 aa).

Belongs to the universal ribosomal protein uS8 family. In terms of assembly, part of the 30S ribosomal subunit.

One of the primary rRNA binding proteins, it binds directly to 16S rRNA central domain where it helps coordinate assembly of the platform of the 30S subunit. The protein is Small ribosomal subunit protein uS8 of Pyrobaculum arsenaticum (strain DSM 13514 / JCM 11321 / PZ6).